A 504-amino-acid polypeptide reads, in one-letter code: Glycerol kinase (504 aa).

T12 is an ADP binding site. T12, T13, and S14 together coordinate ATP. T12 provides a ligand contact to sn-glycerol 3-phosphate. ADP is bound at residue R16. R82, E83, Y134, and D244 together coordinate sn-glycerol 3-phosphate. Residues R82, E83, Y134, D244, and Q245 each coordinate glycerol. Residues T266 and G309 each contribute to the ADP site. ATP contacts are provided by T266, G309, Q313, and G410. Positions 410 and 414 each coordinate ADP.

Belongs to the FGGY kinase family. As to quaternary structure, homotetramer and homodimer (in equilibrium).

The enzyme catalyses glycerol + ATP = sn-glycerol 3-phosphate + ADP + H(+). The protein operates within polyol metabolism; glycerol degradation via glycerol kinase pathway; sn-glycerol 3-phosphate from glycerol: step 1/1. Its activity is regulated as follows. Activated by phosphorylation and inhibited by fructose 1,6-bisphosphate (FBP). Key enzyme in the regulation of glycerol uptake and metabolism. Catalyzes the phosphorylation of glycerol to yield sn-glycerol 3-phosphate. This is Glycerol kinase from Alkaliphilus oremlandii (strain OhILAs) (Clostridium oremlandii (strain OhILAs)).